A 150-amino-acid chain; its full sequence is Holo-[acyl-carrier-protein] synthase (150 aa).

Residues Asp8 and Glu57 each contribute to the Mg(2+) site.

This sequence belongs to the P-Pant transferase superfamily. AcpS family. The cofactor is Mg(2+).

It localises to the cytoplasm. The catalysed reaction is apo-[ACP] + CoA = holo-[ACP] + adenosine 3',5'-bisphosphate + H(+). Functionally, transfers the 4'-phosphopantetheine moiety from coenzyme A to a Ser of acyl-carrier-protein. This Jannaschia sp. (strain CCS1) protein is Holo-[acyl-carrier-protein] synthase.